Consider the following 432-residue polypeptide: MGKNVVVLGTQWGDEGKGKVVDLLTERAKYVVRYQGGHNAGHTLVINGEKTVLHLIPSGILRENVVSIIANGVVLSPEALMKEMGELEARGIPVRERMLISEACPLILAYHVAMDVAREKARGAKAIGTTGRGIGPAYEDKVARRALRVGDLFNKDTFATKLKEVVDYYNFQLVHYYQADTVDYQMVLDDILAVAYVLTGMVVDVSELLDSARKRGDLMMFEGAQGTLLDIDHGTYPYVTSSNTTAGGVATGSGLGPRYVDYVLGIVKAYSTRVGAGPFPTELFDDTGEFLCVKGNEFGATTGRRRRTGWLDAVAVRRAVQINSLSGFCLTKLDVLDGLQEVKICTAYRLPDGRVVESTPLAAENWEGIEPIYESMPGWSESTFGVKAFDKLPEAARRYIKRIEEVTGVPVDIVSTGPDRSETMILRDPFDA.

GTP is bound by residues 13–19 (GDEGKGK) and 41–43 (GHT). Residue aspartate 14 is the Proton acceptor of the active site. Mg(2+) contacts are provided by aspartate 14 and glycine 41. Residues 14–17 (DEGK), 39–42 (NAGH), threonine 130, arginine 144, glutamine 225, threonine 240, and arginine 304 each bind IMP. The active-site Proton donor is the histidine 42. 300 to 306 (ATTGRRR) is a substrate binding site. GTP is bound by residues arginine 306, 332 to 334 (KLD), and 415 to 417 (STG).

Belongs to the adenylosuccinate synthetase family. Homodimer. Mg(2+) is required as a cofactor.

The protein resides in the cytoplasm. The enzyme catalyses IMP + L-aspartate + GTP = N(6)-(1,2-dicarboxyethyl)-AMP + GDP + phosphate + 2 H(+). The protein operates within purine metabolism; AMP biosynthesis via de novo pathway; AMP from IMP: step 1/2. Plays an important role in the de novo pathway of purine nucleotide biosynthesis. Catalyzes the first committed step in the biosynthesis of AMP from IMP. In Sodalis glossinidius (strain morsitans), this protein is Adenylosuccinate synthetase.